Reading from the N-terminus, the 265-residue chain is Tryptophan synthase alpha chain (265 aa).

Residues glutamate 49 and aspartate 60 each act as proton acceptor in the active site.

This sequence belongs to the TrpA family. As to quaternary structure, tetramer of two alpha and two beta chains.

It carries out the reaction (1S,2R)-1-C-(indol-3-yl)glycerol 3-phosphate + L-serine = D-glyceraldehyde 3-phosphate + L-tryptophan + H2O. It functions in the pathway amino-acid biosynthesis; L-tryptophan biosynthesis; L-tryptophan from chorismate: step 5/5. In terms of biological role, the alpha subunit is responsible for the aldol cleavage of indoleglycerol phosphate to indole and glyceraldehyde 3-phosphate. The polypeptide is Tryptophan synthase alpha chain (Polynucleobacter necessarius subsp. necessarius (strain STIR1)).